The following is an 86-amino-acid chain: Small ribosomal subunit protein bS20 (86 aa).

The protein belongs to the bacterial ribosomal protein bS20 family.

Binds directly to 16S ribosomal RNA. This is Small ribosomal subunit protein bS20 from Bifidobacterium longum subsp. infantis (strain ATCC 15697 / DSM 20088 / JCM 1222 / NCTC 11817 / S12).